The following is a 1873-amino-acid chain: MENEIFTPLLEQFMTSPLVTWVKTFGPLAAGNGTNLDEYVALVDGVFLNQVMLQINPKSESQRVNKKVNNDASLRIHNLSILVKQIKFYYQETLQQLIMMPLPDILIIGKNPFSEQGTEEVKKLLLLLLGCAVQCQKKEEFIEKIQGLDFDTKAAVAAHIQEVTHNQENVFDLQWMEVTDMSQEDIEPLLKNMVSHLRRLIDERDEHSETIVELSEERDGVHFLPHASSSAQSPCGSPGMKRTESRQHLSVELADAKAKIRRLRQELEEKTEQLLDCKQELEQIEVELKRLQQENMNLLSDARSARMYRDELDALREKAVRVDKLESELSRYKERLHDIEFYKARVEELKEDNQVLLETKTMLEDQLEGTRARSDKLHELEKENLQLKAKLHDMEMERDMDRKKIEELMEENMTLEMAQKQSMDESLHLGWELEQISRTSELAEAPQKSLGHEVNELTSSKLLKLEMENQSLTKTVEELRSTADSAAGSTSKILKVEKENQRLNKKVEILENEIIQEKQSLQNCQNLSKDLMKEKAQLEKTIETLRENSERQIKILEQENEHLNQTVSSLRQRSQISAEARVKDIEKENKILHESIKETCGKLSKIEFEKRQMKKELELYKEKGERAEELENELNHLGKENELLQKKITNLKITCEKLETLEQENSELERENRKFKKTLDSFKNLTFQLESLEKENSQLDEENLELRRSVESLKCASMRMAQLQLENKELESEKEQLRKGLELMRASFKKTERLEVSYQGLDTENQRLQKALENSNKKIQQLESELQDLEMENQTLQKSLEELKISSKRLEQLEKENKSLEQETSQLEKDKKQLEKENKRLRQQAEIKDTTLEENNVKIGNLEKENKTLFKEINVYKESCVRLKELEKENKELVKRATIDIKTLVTLREDLVSEKLKTQQMNNDLEKLTHELEKIGLNKERLLHDEQSTDDSRYKLLESKLESTLKKSLEIKEEKIAALEARLEESTNYNQQLRHELKTVKKNYEALKQRQDEERMVQSSIPVSGEDDKWGRESQEATRELLKVKDRLIEVERNNATLQAEKQALKTQLKQLETQNNNLQAQILALQRQTVSLQEQNTTLQTQNAKLQVENSTLNSQSTSLMNQNAQLLIQQSSLENENESIMKEREDLKSLYDALIKDHEKLELLHERQASEYESLISKHGTLKSAHKNLEVEHKDLEDRYNQLLKQKGQLEDLEKMIKTEQEKMLLESKNHEVVASEYKKLCGENDRLNYTYSQLLKETEILQMDHKNLKSVLNNSKLEQTRLEAEFSKLKEQYQQLDITSTKLNNQCELLSQLKGNLEEENRHLLDQIQTLMLQNRTLLEQNMESKDLFHVEQRQYIDKLNELRRQKEKLEEKIMDQYKFYDPSPPRRRGNWITLKMRKLIKSKKDINRERQKSLTLTPTRSDSSEGFLQLPHQDSQDSSSVGSNSLEDGQTLGTKKSSMVALKRLPFLRNRPKDKDKMKACYRRSMSMNDLVQSMVLAGGQWTGSTENLEVPDDISTGKRRKELGAMAFSTTAINFSTVNSSAAFRSKQLVNNKDTTSFEDISPQGISDDSSTGSRVHASRPASLDSGRTSTSNSNNNASLHEVKAGAVNIQSRPQSHSSGDFSLLHDHETWSSSGSSPIQYLKRQTRSSPMLQHKISETIESRAHHKMKAGSPGSEVVTLQQFLEESNKLTSIQLKSSSQENLLDEVMKSLSVSSDFLGKDKPVSCTLARSVSGKTPGDFYDRRTTKPEFLRTGPQKTEDAYTISSAGKPTPSTQGKIKLVKETSVSRQSKDSNPYATLPRASSVISTAEGTTRRTSIHDFLSKDSRLPVSVDSSPPTAGSSSTTASNVNKVQESRNSKSRSREQQSS.

In terms of domain architecture, Calponin-homology (CH) spans 12–132; sequence QFMTSPLVTW…KLLLLLLGCA (121 aa). The stretch at 196–425 forms a coiled coil; the sequence is HLRRLIDERD…EMAQKQSMDE (230 aa). 3 positions are modified to phosphoserine: Ser-233, Ser-237, and Ser-449. Coiled coils occupy residues 458–1232 and 1268–1385; these read TSSK…ESKN and HKNL…KFYD. Disordered regions lie at residues 816-841 and 1013-1034; these read ENKS…NKRL and EERM…GRES. Ser-1020 bears the Phosphoserine mark. Residue Ser-1387 is modified to Phosphoserine. The phosphoinositide-binding stretch occupies residues 1390–1408; that stretch reads RRRGNWITLKMRKLIKSKK. The segment covering 1407–1416 has biased composition (basic and acidic residues); it reads KKDINRERQK. 3 disordered regions span residues 1407–1459, 1560–1602, and 1616–1643; these read KKDI…LGTK, TTSF…SNNN, and QSRP…GSSP. Ser-1417 bears the Phosphoserine; by PKB/AKT1 mark. 4 stretches are compositionally biased toward polar residues: residues 1417-1430, 1445-1459, 1560-1579, and 1616-1626; these read SLTL…SSEG, VGSN…LGTK, TTSF…STGS, and QSRPQSHSSGD. Thr-1421 is subject to Phosphothreonine. Residues 1674–1704 carry the GBA motif; the sequence is KAGSPGSEVVTLQQFLEESNKLTSIQLKSSS. A phosphoserine mark is found at Ser-1677, Ser-1692, and Ser-1719. Positions 1715–1825 are SH2-like; required for interaction with growth factor receptors; that stretch reads SLSVSSDFLG…GTTRRTSIHD (111 aa). Positions 1738–1873 are disordered; the sequence is SGKTPGDFYD…KSRSREQQSS (136 aa). The span at 1745–1755 shows a compositional bias: basic and acidic residues; the sequence is FYDRRTTKPEF. Tyr-1767 bears the Phosphotyrosine mark. Composition is skewed to polar residues over residues 1768-1781, 1789-1801, and 1809-1820; these read TISS…STQG, TSVS…SNPY, and SVISTAEGTTRR. Tyr-1801 is modified (phosphotyrosine). Phosphoserine is present on residues Ser-1822 and Ser-1839. The span at 1822-1832 shows a compositional bias: basic and acidic residues; it reads SIHDFLSKDSR. Low complexity predominate over residues 1839–1852; it reads SSPPTAGSSSTTAS. The segment covering 1858 to 1873 has biased composition (basic and acidic residues); that stretch reads QESRNSKSRSREQQSS.

It belongs to the CCDC88 family. As to quaternary structure, homodimer. Interacts (via GBA motif) with guanine nucleotide-binding protein G(i) alpha subunits GNAI1, GNAI2 and GNAI3. Also interacts (via GNA motif) with guanine nucleotide-binding protein G(s) alpha subunit GNAS. Interaction with G(i) alpha subunits occurs before interaction with GNAS and is regulated by phosphorylation; phosphorylation at Ser-1677 enhances binding to G(i) alpha subunits while phosphorylation at Ser-1692 abolishes G(i) alpha subunit binding, promoting binding to GNAS. Interacts (via C-terminal SH2-like region) with growth factor receptors EGFR, INSR and KDR/VEGFR2 (via their autophosphorylated cytoplasmic tails). Forms a complex with EGFR and GNAI3 which leads to enhanced EGFR signaling and triggering of cell migration; ligand stimulation is required for recruitment of GNAI3 to the complex. Interacts (tyrosine-phosphorylated form) with phosphatidylinositol 3-kinase (PI3K) regulatory subunit PIK3R1/p85a (via SH2 domains); the interaction enables recruitment of PIK3R1 to the EGFR receptor, enhancing PI3K activity and cell migration. Interacts with serine/threonine-protein kinase PRKCQ; the interaction leads to phosphorylation of CCDC88A and inhibition of its guanine nucleotide exchange factor activity. Interacts (via C-terminus) with DISC1; the interaction is direct. Interacts with AKT proteins; the interaction is inhibited in the presence of DISC1. Interacts with AKT1/PKB (via C-terminus). The non-phosphorylated form interacts with phosphatidylinositol 4-phosphate [Pi(4)P] and weakly with phosphatidylinositol 3-phosphate [Pi(3)P]. Interacts with microtubules. Interacts with actin. In terms of processing, phosphorylation is induced by epidermal growth factor (EGF) in a phosphoinositide 3-kinase (PI3K)-dependent manner. Phosphorylation by AKT1/PKB is necessary for the delocalization from the cell membrane and for cell migration. Phosphorylated on tyrosine residues which promotes binding to phosphatidylinositol 3-kinase (PI3K) regulatory subunit PIK3R1/p85a and enhances PI3K activity. Tyrosine-phosphorylated by both receptor and non-receptor tyrosine kinases in vitro. Tyrosine phosphorylation is required for AKT1-dependent phosphorylation of Ser-1417. Phosphorylation at Ser-1692 by PRKCQ disrupts interaction with GNAI3 and inhibits guanine nucleotide exchange factor activity. Expressed in the dentate gyrus, pyramidal cell layer of hippocampal regions CA1 and CA3 at postnatal 15. Expressed highly in neurons. Weakly in neuron progenitors (at protein level). Expressed in the dentate granule cell layer of the hippocampus. Expressed highly in the adult testis, moderately in the brain and at a low level in the spleen, lungs and fat.

It is found in the cell membrane. Its subcellular location is the cytoplasm. The protein resides in the cytosol. It localises to the cytoplasmic vesicle. The protein localises to the cell projection. It is found in the lamellipodium. Its subcellular location is the cytoskeleton. The protein resides in the cilium basal body. It localises to the microtubule organizing center. The protein localises to the centrosome. It is found in the centriole. Its function is as follows. Bifunctional modulator of guanine nucleotide-binding proteins (G proteins). Acts as a non-receptor guanine nucleotide exchange factor which binds to and activates guanine nucleotide-binding protein G(i) alpha subunits. Also acts as a guanine nucleotide dissociation inhibitor for guanine nucleotide-binding protein G(s) subunit alpha GNAS. Essential for cell migration. Interacts in complex with G(i) alpha subunits with the EGFR receptor, retaining EGFR at the cell membrane following ligand stimulation and promoting EGFR signaling which triggers cell migration. Binding to Gi-alpha subunits displaces the beta and gamma subunits from the heterotrimeric G-protein complex which enhances phosphoinositide 3-kinase (PI3K)-dependent phosphorylation and kinase activity of AKT1/PKB. Phosphorylation of AKT1/PKB induces the phosphorylation of downstream effectors GSK3 and FOXO1/FKHR, and regulates DNA replication and cell proliferation. Binds in its tyrosine-phosphorylated form to the phosphatidylinositol 3-kinase (PI3K) regulatory subunit PIK3R1 which enables recruitment of PIK3R1 to the EGFR receptor, enhancing PI3K activity and cell migration. Plays a role as a key modulator of the AKT-mTOR signaling pathway, controlling the tempo of the process of newborn neuron integration during adult neurogenesis, including correct neuron positioning, dendritic development and synapse formation. Inhibition of G(s) subunit alpha GNAS leads to reduced cellular levels of cAMP and suppression of cell proliferation. Essential for the integrity of the actin cytoskeleton. Required for formation of actin stress fibers and lamellipodia. May be involved in membrane sorting in the early endosome. Plays a role in ciliogenesis and cilium morphology and positioning and this may partly be through regulation of the localization of scaffolding protein CROCC/Rootletin. The polypeptide is Girdin (Ccdc88a) (Mus musculus (Mouse)).